Reading from the N-terminus, the 336-residue chain is MTYAIHESLTLLSQKQNLPEELTFTVVQDLLSGELTPAQIGGLLLGLSLKGETPEEIAAFAQALRGAGLKIKAPAGTLDTCGTGGDRSGTFNISTTAAFVIAGAGVPVAKHGNRFASGRCGSADVLEQLGISLKATPESSERHLQHIGMTFLFAQVYHPAMAKVARERRELGIRTIFNLLGPLLNPAGAPYQLLGVSSPSLLPKMAKALQILGSKRAVVAVGEDGLDEVTLTGATQAILIDGGAIQPFIIRPEEYGLNLCSLQDLQGGTPAENGQITLRILQGKKGPQRDIVLLNAGTALYAANKAAGIREGIALAAESLDSGKALSILEKLKASA.

Residues glycine 82, 85–86 (GD), threonine 90, 92–95 (NIST), 110–118 (KHGNRFASG), and serine 122 each bind 5-phospho-alpha-D-ribose 1-diphosphate. Residue glycine 82 coordinates anthranilate. Residue serine 94 participates in Mg(2+) binding. Residue asparagine 113 coordinates anthranilate. Arginine 168 is an anthranilate binding site. Residues aspartate 227 and glutamate 228 each contribute to the Mg(2+) site.

It belongs to the anthranilate phosphoribosyltransferase family. Homodimer. The cofactor is Mg(2+).

The catalysed reaction is N-(5-phospho-beta-D-ribosyl)anthranilate + diphosphate = 5-phospho-alpha-D-ribose 1-diphosphate + anthranilate. It functions in the pathway amino-acid biosynthesis; L-tryptophan biosynthesis; L-tryptophan from chorismate: step 2/5. Functionally, catalyzes the transfer of the phosphoribosyl group of 5-phosphorylribose-1-pyrophosphate (PRPP) to anthranilate to yield N-(5'-phosphoribosyl)-anthranilate (PRA). This is Anthranilate phosphoribosyltransferase from Desulfitobacterium hafniense (strain DSM 10664 / DCB-2).